A 78-amino-acid polypeptide reads, in one-letter code: Myrmicitoxin-Ta2a (78 aa).

The N-terminal stretch at methionine 1 to alanine 26 is a signal peptide. Residues lysine 27–alanine 56 constitute a propeptide that is removed on maturation. Lysine amide is present on lysine 77.

This sequence belongs to the formicidae venom precursor-01 superfamily. Expressed by the venom gland.

It is found in the secreted. Functionally, peptide with toxicity towards insects that may also act as antimicrobial peptide. Causes calcium influx in F11 cells (EC(50)=5.8 nM), possibly by modulating sodium channels (Nav). In vivo, is lethal to insects, but does not show toxicity to vertebrates. Intraplantar injection into mice does not induce spontaneous nocifensive behaviors up to a dose of 200 pmol. The chain is Myrmicitoxin-Ta2a from Tetramorium africanum (Fierce ant).